The following is a 347-amino-acid chain: GTPase Obg (347 aa).

In terms of domain architecture, Obg spans 1-158; that stretch reads MFIDNVKLVL…LSVRLELKLI (158 aa). The 181-residue stretch at 159–339 folds into the OBG-type G domain; sequence ADVGLVGFPN…LKFMLLEEVK (181 aa). GTP is bound by residues 165–172, 190–194, 212–215, 280–283, and 320–322; these read GFPNVGKS, FTTLT, DIPG, SKSD, and SSL. Mg(2+) is bound by residues Ser172 and Thr192.

The protein belongs to the TRAFAC class OBG-HflX-like GTPase superfamily. OBG GTPase family. Monomer. Requires Mg(2+) as cofactor.

The protein localises to the cytoplasm. Its function is as follows. An essential GTPase which binds GTP, GDP and possibly (p)ppGpp with moderate affinity, with high nucleotide exchange rates and a fairly low GTP hydrolysis rate. Plays a role in control of the cell cycle, stress response, ribosome biogenesis and in those bacteria that undergo differentiation, in morphogenesis control. The polypeptide is GTPase Obg (Campylobacter lari (strain RM2100 / D67 / ATCC BAA-1060)).